The chain runs to 101 residues: Large ribosomal subunit protein uL24 (101 aa).

Belongs to the universal ribosomal protein uL24 family. Part of the 50S ribosomal subunit.

In terms of biological role, one of two assembly initiator proteins, it binds directly to the 5'-end of the 23S rRNA, where it nucleates assembly of the 50S subunit. One of the proteins that surrounds the polypeptide exit tunnel on the outside of the subunit. The polypeptide is Large ribosomal subunit protein uL24 (Streptococcus suis (strain 98HAH33)).